The sequence spans 199 residues: Adenine phosphoribosyltransferase (199 aa).

Belongs to the purine/pyrimidine phosphoribosyltransferase family. In terms of assembly, homodimer.

It localises to the cytoplasm. It carries out the reaction AMP + diphosphate = 5-phospho-alpha-D-ribose 1-diphosphate + adenine. Its pathway is purine metabolism; AMP biosynthesis via salvage pathway; AMP from adenine: step 1/1. Functionally, catalyzes a salvage reaction resulting in the formation of AMP, that is energically less costly than de novo synthesis. This chain is Adenine phosphoribosyltransferase, found in Rhodopseudomonas palustris (strain BisB18).